The chain runs to 572 residues: Proline dehydrogenase 1, mitochondrial (572 aa).

Residues 105-124 (NHSNQTNNVNNKNYNNNNNN) show a composition bias toward low complexity. The tract at residues 105-140 (NHSNQTNNVNNKNYNNNNNNFEKDDKFGPPNNQNNN) is disordered.

This sequence belongs to the proline oxidase family. It depends on FAD as a cofactor.

The protein resides in the mitochondrion matrix. It catalyses the reaction L-proline + a quinone = (S)-1-pyrroline-5-carboxylate + a quinol + H(+). The protein operates within amino-acid degradation; L-proline degradation into L-glutamate; L-glutamate from L-proline: step 1/2. Converts proline to delta-1-pyrroline-5-carboxylate. The protein is Proline dehydrogenase 1, mitochondrial (prodh) of Dictyostelium discoideum (Social amoeba).